A 345-amino-acid polypeptide reads, in one-letter code: MDKTKALEGALSQIERAFGKGSIMRMGQRPKVETNVISTGSIGLDIALGIGGMPRGRIVEIYGPESSGKTTLALHVLAEAQKKGGTVAFIDAEHALDPGYARKLGVNIDDLLLSQPDAGEQALEIADTLVRSGAVDVLVVDSVAALVPRAELEGDMGDSHVGLHARLMSQALRKLTGTVSRSNTLVIFLNQIRMKIGVMFGNPETTTGGNALKFYSSIRLDIRRIGSIKDKDEVVGNQTRVKVVKNKMAPPFRQVEFDIMYGEGISKMGELLDLGVKGNIVEKSGAWFSFDSQRIGQGRENAKQFLREHPEMASEIERRIRAEAGVLSDALMTDPEPDADGTPED.

63–70 (GPESSGKT) contributes to the ATP binding site. Residues 326 to 345 (VLSDALMTDPEPDADGTPED) form a disordered region. Residues 335–345 (PEPDADGTPED) show a composition bias toward acidic residues.

This sequence belongs to the RecA family.

It localises to the cytoplasm. Functionally, can catalyze the hydrolysis of ATP in the presence of single-stranded DNA, the ATP-dependent uptake of single-stranded DNA by duplex DNA, and the ATP-dependent hybridization of homologous single-stranded DNAs. It interacts with LexA causing its activation and leading to its autocatalytic cleavage. The sequence is that of Protein RecA from Gluconobacter oxydans (strain 621H) (Gluconobacter suboxydans).